The following is a 182-amino-acid chain: MSSFFKFYKASLQSHPKRTNALTTGFLFGLGDIVAQTQFPEPGASYDPMRTLRPFLYGAVLFSLVGDKWYRFLSTVRLGRLPQAHWANVLARVACDQLIFAPIGVPLYYTAMALMEGGSLEDVRIRLSEKWWSTLLANWIVWPAFQLCNFSLVPVQHRLLTVNVLSIFWNTYLSYSNSTASS.

A run of 3 helical transmembrane segments spans residues 51 to 70 (TLRP…DKWY), 98 to 118 (LIFA…MEGG), and 135 to 155 (LLAN…LVPV).

The protein belongs to the peroxisomal membrane protein PXMP2/4 family.

The protein resides in the mitochondrion inner membrane. Functionally, may be involved in cellular response to stress. Required to maintain mitochondrial DNA (mtDNA) integrity and stability. In Eremothecium gossypii (strain ATCC 10895 / CBS 109.51 / FGSC 9923 / NRRL Y-1056) (Yeast), this protein is Protein SYM1 (SYM1).